A 96-amino-acid polypeptide reads, in one-letter code: Small ribosomal subunit protein bS6 (96 aa).

This sequence belongs to the bacterial ribosomal protein bS6 family.

In terms of biological role, binds together with bS18 to 16S ribosomal RNA. In Cutibacterium acnes (strain DSM 16379 / KPA171202) (Propionibacterium acnes), this protein is Small ribosomal subunit protein bS6.